The primary structure comprises 334 residues: Malate dehydrogenase, cytoplasmic (334 aa).

Residue S2 is modified to N-acetylserine. NAD(+) contacts are provided by residues 11-17 (GAAGQIA) and D42. Substrate-binding residues include R92 and R98. Position 105 (N105) interacts with NAD(+). K110 carries the post-translational modification N6-succinyllysine. Q112 provides a ligand contact to NAD(+). An N6-acetyllysine mark is found at K118 and K121. 129–131 (VGN) is an NAD(+) binding site. Positions 131 and 162 each coordinate substrate. Residue H187 is the Proton acceptor of the active site. Position 214 is an N6-succinyllysine (K214). The residue at position 217 (S217) is a Phosphoserine. Position 230 is an omega-N-methylarginine (R230). S241 carries the post-translational modification Phosphoserine. Residue K298 is modified to N6-acetyllysine; alternate. K298 carries the post-translational modification N6-succinyllysine; alternate. S309 is subject to Phosphoserine. At K318 the chain carries N6-succinyllysine. Phosphoserine occurs at positions 332 and 333.

The protein belongs to the LDH/MDH superfamily. MDH type 2 family. As to quaternary structure, homodimer. Post-translationally, ISGylated. In terms of processing, acetylation at Lys-118 dramatically enhances enzymatic activity and promotes adipogenic differentiation.

The protein resides in the cytoplasm. The protein localises to the cytosol. The catalysed reaction is (S)-malate + NAD(+) = oxaloacetate + NADH + H(+). It catalyses the reaction (2R)-2-hydroxy-3-(4-hydroxyphenyl)propanoate + NAD(+) = 3-(4-hydroxyphenyl)pyruvate + NADH + H(+). It carries out the reaction (S)-2-hydroxyglutarate + NAD(+) = 2-oxoglutarate + NADH + H(+). Its function is as follows. Catalyzes the reduction of aromatic alpha-keto acids in the presence of NADH. Plays essential roles in the malate-aspartate shuttle and the tricarboxylic acid cycle, important in mitochondrial NADH supply for oxidative phosphorylation. Catalyzes the reduction of 2-oxoglutarate to 2-hydroxyglutarate, leading to elevated reactive oxygen species (ROS). This Homo sapiens (Human) protein is Malate dehydrogenase, cytoplasmic.